A 597-amino-acid polypeptide reads, in one-letter code: Phosphomethylpyrimidine synthase (597 aa).

Residues Asn207, Met236, Tyr265, His301, 321-323 (SRG), 362-365 (DGLR), and Glu401 each bind substrate. Zn(2+) is bound at residue His405. Tyr428 contributes to the substrate binding site. Residue His469 participates in Zn(2+) binding. [4Fe-4S] cluster contacts are provided by Cys549, Cys552, and Cys557.

It belongs to the ThiC family. Homodimer. It depends on [4Fe-4S] cluster as a cofactor.

It catalyses the reaction 5-amino-1-(5-phospho-beta-D-ribosyl)imidazole + S-adenosyl-L-methionine = 4-amino-2-methyl-5-(phosphooxymethyl)pyrimidine + CO + 5'-deoxyadenosine + formate + L-methionine + 3 H(+). It functions in the pathway cofactor biosynthesis; thiamine diphosphate biosynthesis. Its function is as follows. Catalyzes the synthesis of the hydroxymethylpyrimidine phosphate (HMP-P) moiety of thiamine from aminoimidazole ribotide (AIR) in a radical S-adenosyl-L-methionine (SAM)-dependent reaction. This chain is Phosphomethylpyrimidine synthase, found in Gluconobacter oxydans (strain 621H) (Gluconobacter suboxydans).